Here is a 340-residue protein sequence, read N- to C-terminus: Flap endonuclease 1 (340 aa).

Residues 1-98 (MGVPIGEIIP…KELEKRREAR (98 aa)) are N-domain. Mg(2+)-binding residues include Asp-27, Asp-80, Glu-152, Glu-154, Asp-173, Asp-175, and Asp-236. An I-domain region spans residues 116-258 (EARKYAQRAT…KALEIVRHSK (143 aa)). The interval 330–338 (KQSTLESWF) is interaction with PCNA.

It belongs to the XPG/RAD2 endonuclease family. FEN1 subfamily. In terms of assembly, interacts with PCNA. PCNA stimulates the nuclease activity without altering cleavage specificity. Mg(2+) is required as a cofactor.

Functionally, structure-specific nuclease with 5'-flap endonuclease and 5'-3' exonuclease activities involved in DNA replication and repair. During DNA replication, cleaves the 5'-overhanging flap structure that is generated by displacement synthesis when DNA polymerase encounters the 5'-end of a downstream Okazaki fragment. Binds the unpaired 3'-DNA end and kinks the DNA to facilitate 5' cleavage specificity. Cleaves one nucleotide into the double-stranded DNA from the junction in flap DNA, leaving a nick for ligation. Also involved in the base excision repair (BER) pathway. Acts as a genome stabilization factor that prevents flaps from equilibrating into structures that lead to duplications and deletions. Also possesses 5'-3' exonuclease activity on nicked or gapped double-stranded DNA. The polypeptide is Flap endonuclease 1 (Pyrococcus furiosus (strain ATCC 43587 / DSM 3638 / JCM 8422 / Vc1)).